A 293-amino-acid polypeptide reads, in one-letter code: Exosome complex component RRP4 (293 aa).

The S1 motif domain occupies 79-159 (EVGDIVVGRI…SDGAVSLHTR (81 aa)). At Ser-124 the chain carries Phosphoserine.

The protein belongs to the RRP4 family. As to quaternary structure, component of the RNA exosome core complex (Exo-9), composed of EXOSC1, EXOSC2, EXOSC3, EXOSC4, EXOSC5, EXOSC6, EXOSC7, EXOSC8 and EXOSC9; within the complex interacts with EXOSC4 and EXOSC7. The catalytically inactive RNA exosome core complex (Exo-9) associates with the catalytic subunit EXOSC10/RRP6. Exo-9 may associate with DIS3 to form the nucleolar exosome complex, or DIS3L to form the cytoplasmic exosome complex. Exo-9 is formed by a hexameric base ring consisting of the heterodimers EXOSC4-EXOSC9, EXOSC5-EXOSC8 and EXOSC6-EXOSC7, and a cap ring consisting of EXOSC1, EXOSC2 and EXOSC3. The RNA exosome complex associates with cofactors C1D/RRP47, MPHOSPH6/MPP6 and MTREX/MTR4. Interacts with GTPBP1. Interacts with ZFP36L1 (via N-terminus).

It is found in the cytoplasm. It localises to the nucleus. Its subcellular location is the nucleolus. Non-catalytic component of the RNA exosome complex which has 3'-&gt;5' exoribonuclease activity and participates in a multitude of cellular RNA processing and degradation events. In the nucleus, the RNA exosome complex is involved in proper maturation of stable RNA species such as rRNA, snRNA and snoRNA, in the elimination of RNA processing by-products and non-coding 'pervasive' transcripts, such as antisense RNA species and promoter-upstream transcripts (PROMPTs), and of mRNAs with processing defects, thereby limiting or excluding their export to the cytoplasm. The RNA exosome may be involved in Ig class switch recombination (CSR) and/or Ig variable region somatic hypermutation (SHM) by targeting AICDA deamination activity to transcribed dsDNA substrates. In the cytoplasm, the RNA exosome complex is involved in general mRNA turnover and specifically degrades inherently unstable mRNAs containing AU-rich elements (AREs) within their 3' untranslated regions, and in RNA surveillance pathways, preventing translation of aberrant mRNAs. It seems to be involved in degradation of histone mRNA. The catalytic inactive RNA exosome core complex of 9 subunits (Exo-9) is proposed to play a pivotal role in the binding and presentation of RNA for ribonucleolysis, and to serve as a scaffold for the association with catalytic subunits and accessory proteins or complexes. EXOSC2 as peripheral part of the Exo-9 complex stabilizes the hexameric ring of RNase PH-domain subunits through contacts with EXOSC4 and EXOSC7. This chain is Exosome complex component RRP4 (EXOSC2), found in Bos taurus (Bovine).